The following is a 728-amino-acid chain: Meiotic sister-chromatid recombination protein 3 (728 aa).

7 disordered regions span residues 33–171, 236–261, 300–335, 363–403, 422–454, 495–514, and 561–728; these read QLSA…GRTQ, NETD…LNVE, PTHQ…EAEA, SDNA…VKSN, SAPH…ANTG, VGVS…QHYL, and YGYQ…KSSR. Residues 35-46 show a composition bias toward low complexity; it reads SAAAASAASAAS. Residues 48–58 show a composition bias toward polar residues; it reads DRTNYSRSHSL. Residues Ser-57 and Ser-64 each carry the phosphoserine modification. Positions 80-93 are enriched in low complexity; sequence STSSAAPPTSRAAA. Polar residues-rich tracts occupy residues 95–106, 118–132, and 140–171; these read QYSQKTYSLRSQ, YTTN…TSGA, and KNKS…GRTQ. Residues Ser-127, Ser-151, and Ser-155 each carry the phosphoserine modification. Over residues 251 to 261 the composition is skewed to basic and acidic residues; the sequence is HLQDDSELNVE. Residues 309-326 show a composition bias toward basic residues; sequence IHNKRKQASTTRRKKRPP. Phosphoserine is present on Ser-363. Polar residues-rich tracts occupy residues 363-373 and 385-403; these read SDNASAPLGSN and TLRS…VKSN. Residues 590–634 show a composition bias toward polar residues; that stretch reads EGVTTAKPSSNEGVMTNPVVTDSPSPLQQQIDSTTASSNGQSQGN. Residues 635–646 show a composition bias toward low complexity; it reads VPTSAVASTTRT. Phosphothreonine is present on Thr-646. Composition is skewed to polar residues over residues 654–668, 675–684, and 691–708; these read NLKS…QTPQ, DPTTSSTNEL, and MVTS…TQDP. Position 660 is a phosphoserine (Ser-660). Residues 711-728 are compositionally biased toward basic residues; the sequence is KHKKSSFFTKLFKKKSSR.

It is found in the cell membrane. Its function is as follows. May be involved in the control of meiotic sister-chromatid recombination. The chain is Meiotic sister-chromatid recombination protein 3 (MSC3) from Saccharomyces cerevisiae (strain ATCC 204508 / S288c) (Baker's yeast).